The chain runs to 261 residues: Imidazole glycerol phosphate synthase subunit HisF (261 aa).

Active-site residues include Asp16 and Asp135.

It belongs to the HisA/HisF family. As to quaternary structure, heterodimer of HisH and HisF.

It localises to the cytoplasm. It catalyses the reaction 5-[(5-phospho-1-deoxy-D-ribulos-1-ylimino)methylamino]-1-(5-phospho-beta-D-ribosyl)imidazole-4-carboxamide + L-glutamine = D-erythro-1-(imidazol-4-yl)glycerol 3-phosphate + 5-amino-1-(5-phospho-beta-D-ribosyl)imidazole-4-carboxamide + L-glutamate + H(+). It functions in the pathway amino-acid biosynthesis; L-histidine biosynthesis; L-histidine from 5-phospho-alpha-D-ribose 1-diphosphate: step 5/9. Its function is as follows. IGPS catalyzes the conversion of PRFAR and glutamine to IGP, AICAR and glutamate. The HisF subunit catalyzes the cyclization activity that produces IGP and AICAR from PRFAR using the ammonia provided by the HisH subunit. This Mycobacterium sp. (strain JLS) protein is Imidazole glycerol phosphate synthase subunit HisF.